The following is a 126-amino-acid chain: Lymphocyte antigen 6 complex locus protein G6c (126 aa).

Positions 1–19 are cleaved as a signal peptide; it reads MKHLLLLTLSALLYCWVSA. In terms of domain architecture, UPAR/Ly6 spans 21-112; it reads TRCHSCYKVP…PRPTPALALI (92 aa). 3 disulfide bridges follow: Cys23–Cys48, Cys26–Cys34, and Cys40–Cys66. Asn89 carries N-linked (GlcNAc...) (high mannose) asparagine glycosylation. Cysteines 93 and 98 form a disulfide. Ser100 is lipidated: GPI-anchor amidated serine. A propeptide spans 101–126 (removed in mature form); the sequence is PAPRPTPALALISLTSLAGLGLWLLH.

In terms of assembly, monomer. In terms of processing, N-glycosylated. Highly expressed at the leading edges of cells, on filopodia.

The protein localises to the cell membrane. The polypeptide is Lymphocyte antigen 6 complex locus protein G6c (Ly6g6c) (Mus musculus (Mouse)).